Consider the following 325-residue polypeptide: Ribosomal RNA small subunit methyltransferase H (325 aa).

S-adenosyl-L-methionine-binding positions include 32–34 (GGH), aspartate 52, phenylalanine 79, aspartate 100, and glutamine 107.

This sequence belongs to the methyltransferase superfamily. RsmH family.

The protein resides in the cytoplasm. It carries out the reaction cytidine(1402) in 16S rRNA + S-adenosyl-L-methionine = N(4)-methylcytidine(1402) in 16S rRNA + S-adenosyl-L-homocysteine + H(+). Functionally, specifically methylates the N4 position of cytidine in position 1402 (C1402) of 16S rRNA. The polypeptide is Ribosomal RNA small subunit methyltransferase H (Oceanobacillus iheyensis (strain DSM 14371 / CIP 107618 / JCM 11309 / KCTC 3954 / HTE831)).